A 629-amino-acid chain; its full sequence is MFYPDPFDVIIIGGGHAGTEAAMAAARMGQQTLLLTHNIDTLGQMSCNPAIGGIGKGHLVKEVDALGGLMAKAIDQAGIQFRILNASKGPAVRATRAQADRVLYRQAVRTALENQPNLMIFQQAVEDLIVENDRVVGAVTQMGLKFRAKAVVLTVGTFLDGKIHIGLDNYSGGRAGDPPSIPLSRRLRELPLRVGRLKTGTPPRIDARTIDFSVLAQQHGDNPMPVFSFMGNASQHPQQVPCYITHTNEKTHDVIRSNLDRSPMYAGVIEGVGPRYCPSIEDKVMRFADRNQHQIFLEPEGLTSNEIYPNGISTSLPFDVQMQIVRSMQGMENAKIVRPGYAIEYDFFDPRDLKPTLESKFIQGLFFAGQINGTTGYEEAAAQGLLAGLNAARLSDDKEGWAPARSQAYLGVLVDDLCTLGTKEPYRMFTSRAEYRLMLREDNADLRLTEIGRELGLVDDERWARFNEKLENIERERQRLKSTWVTPSAEAAAEVNAHLTAPLSREASGEDLLRRPEMTYEKLTTLTPFAPALTDEQAAEQVEIQVKYEGYIARQQDEIEKQLRNENTLLPATLDYRQVSGLSNEVIAKLNDHKPASIGQASRISGVTPAAISILLVWLKKQGMLRRSA.

FAD-binding positions include 13 to 18 (GGGHAG), Val-125, and Ser-180. 273–287 (GPRYCPSIEDKVMRF) serves as a coordination point for NAD(+). Gln-370 contributes to the FAD binding site.

The protein belongs to the MnmG family. In terms of assembly, homodimer. Heterotetramer of two MnmE and two MnmG subunits. It depends on FAD as a cofactor.

The protein resides in the cytoplasm. Functionally, NAD-binding protein involved in the addition of a carboxymethylaminomethyl (cmnm) group at the wobble position (U34) of certain tRNAs, forming tRNA-cmnm(5)s(2)U34. This is tRNA uridine 5-carboxymethylaminomethyl modification enzyme MnmG from Escherichia coli O157:H7.